Reading from the N-terminus, the 405-residue chain is Tyrosine--tRNA ligase (405 aa).

Positions 41-50 (PTAPDLHLGH) match the 'HIGH' region motif. The short motif at 225–229 (KMSKS) is the 'KMSKS' region element. Lys-228 contacts ATP. The region spanning 342 to 404 (EPLLVWVLSK…GKKGKFLKII (63 aa)) is the S4 RNA-binding domain.

It belongs to the class-I aminoacyl-tRNA synthetase family. TyrS type 2 subfamily. As to quaternary structure, homodimer.

It is found in the cytoplasm. It catalyses the reaction tRNA(Tyr) + L-tyrosine + ATP = L-tyrosyl-tRNA(Tyr) + AMP + diphosphate + H(+). Functionally, catalyzes the attachment of tyrosine to tRNA(Tyr) in a two-step reaction: tyrosine is first activated by ATP to form Tyr-AMP and then transferred to the acceptor end of tRNA(Tyr). The sequence is that of Tyrosine--tRNA ligase from Leptospira interrogans serogroup Icterohaemorrhagiae serovar Lai (strain 56601).